A 479-amino-acid polypeptide reads, in one-letter code: tRNA modification GTPase MnmE (479 aa).

The (6S)-5-formyl-5,6,7,8-tetrahydrofolate site is built by Arg25, Glu82, and Lys134. The 172-residue stretch at 230–401 (GLRVVIAGQP…LRAALLARAG (172 aa)) folds into the TrmE-type G domain. Asn240 provides a ligand contact to K(+). Residues 240-245 (NAGKSS), 259-265 (TPIPGTT), 284-287 (DTAG), 352-355 (NKAD), and 382-384 (SAR) each bind GTP. Residue Ser244 coordinates Mg(2+). K(+) contacts are provided by Thr259, Ile261, and Thr264. Thr265 is a Mg(2+) binding site. Residue Lys479 participates in (6S)-5-formyl-5,6,7,8-tetrahydrofolate binding.

It belongs to the TRAFAC class TrmE-Era-EngA-EngB-Septin-like GTPase superfamily. TrmE GTPase family. As to quaternary structure, homodimer. Heterotetramer of two MnmE and two MnmG subunits. Requires K(+) as cofactor.

It is found in the cytoplasm. Exhibits a very high intrinsic GTPase hydrolysis rate. Involved in the addition of a carboxymethylaminomethyl (cmnm) group at the wobble position (U34) of certain tRNAs, forming tRNA-cmnm(5)s(2)U34. This chain is tRNA modification GTPase MnmE, found in Leptothrix cholodnii (strain ATCC 51168 / LMG 8142 / SP-6) (Leptothrix discophora (strain SP-6)).